We begin with the raw amino-acid sequence, 351 residues long: Cytoplasmic dynein 2 light intermediate chain 1 (351 aa).

A disordered region spans residues threonine 304–glutamine 335. Residues aspartate 323–glutamine 335 show a composition bias toward basic and acidic residues.

It belongs to the dynein light intermediate chain family. In terms of assembly, light intermediate chain of the cytoplasmic dynein complex 2, a multisubunit complex composed at least of eleven different proteins. The cytoplasmic dynein 2 complex consists of two catalytic heavy chains (HCs) and a number of non-catalytic subunits presented by intermediate chains (ICs), light intermediate chains (LICs) and light chains (LCs). Among them, a heavy chain (DYNC2H1), two intermediate chains (DYNC2I2 and DYNC2I1), a light intermediate chain (DYNC2LI1), and a light chain (DYNLT2B) are unique to the dynein-2 complex, but a subset of light chains are also shared by dynein-1 and dynein-2 complexes. Dynein-2 complex is built around two copies of cytoplasmic dynein 2 heavy chain 1 (DYNC2H1). The C-terminal region forms the motor domain, which converts the energy from ATP hydrolysis into movement. Its N-terminal region forms the tail, an extended structure that binds the other subunits and holds the two heavy chains in a homodimer. Interacts with DYNC2H1 (via N-terminus); this interaction stabilizes the dynein-2 complex structure.

Its subcellular location is the cytoplasm. It localises to the cell projection. The protein localises to the cilium. The protein resides in the cytoskeleton. It is found in the cilium basal body. Its subcellular location is the cilium axoneme. It localises to the microtubule organizing center. The protein localises to the centrosome. Functionally, acts as one of several non-catalytic accessory components of the cytoplasmic dynein 2 complex (dynein-2 complex), a motor protein complex that drives the movement of cargos along microtubules within cilia and flagella in concert with the intraflagellar transport (IFT) system, facilitating the assembly of these organelles. Involved in the regulation of ciliary length. The sequence is that of Cytoplasmic dynein 2 light intermediate chain 1 (Dync2li1) from Rattus norvegicus (Rat).